The sequence spans 66 residues: UPF0370 protein YpfN (66 aa).

The helical transmembrane segment at 4–24 threads the bilayer; the sequence is LAKYWWILVLVFLVGVLLNVI. The tract at residues 39 to 66 is disordered; sequence KPELPPHRDFNDKWDDEEDWPKKDQPKK. The span at 42-51 shows a compositional bias: basic and acidic residues; the sequence is LPPHRDFNDK.

It belongs to the UPF0370 family.

Its subcellular location is the cell membrane. The chain is UPF0370 protein YpfN from Salmonella paratyphi A (strain AKU_12601).